A 217-amino-acid chain; its full sequence is Pyridoxine/pyridoxamine 5'-phosphate oxidase (217 aa).

Substrate-binding positions include 13–16 and Lys-71; that span reads RREY. FMN-binding positions include 66-71, 81-82, Arg-87, Lys-88, and Gln-110; these read RIVLLK and YT. Substrate is bound by residues Tyr-128, Arg-132, and Ser-136. FMN-binding positions include 145-146 and Trp-190; that span reads QS. 196-198 is a substrate binding site; sequence RLH. Residue Arg-200 participates in FMN binding.

It belongs to the pyridoxamine 5'-phosphate oxidase family. As to quaternary structure, homodimer. Requires FMN as cofactor.

The catalysed reaction is pyridoxamine 5'-phosphate + O2 + H2O = pyridoxal 5'-phosphate + H2O2 + NH4(+). The enzyme catalyses pyridoxine 5'-phosphate + O2 = pyridoxal 5'-phosphate + H2O2. It participates in cofactor metabolism; pyridoxal 5'-phosphate salvage; pyridoxal 5'-phosphate from pyridoxamine 5'-phosphate: step 1/1. It functions in the pathway cofactor metabolism; pyridoxal 5'-phosphate salvage; pyridoxal 5'-phosphate from pyridoxine 5'-phosphate: step 1/1. Functionally, catalyzes the oxidation of either pyridoxine 5'-phosphate (PNP) or pyridoxamine 5'-phosphate (PMP) into pyridoxal 5'-phosphate (PLP). The sequence is that of Pyridoxine/pyridoxamine 5'-phosphate oxidase from Yersinia pestis bv. Antiqua (strain Antiqua).